Consider the following 205-residue polypeptide: Probable nicotinate-nucleotide adenylyltransferase (205 aa).

It belongs to the NadD family.

It carries out the reaction nicotinate beta-D-ribonucleotide + ATP + H(+) = deamido-NAD(+) + diphosphate. It functions in the pathway cofactor biosynthesis; NAD(+) biosynthesis; deamido-NAD(+) from nicotinate D-ribonucleotide: step 1/1. In terms of biological role, catalyzes the reversible adenylation of nicotinate mononucleotide (NaMN) to nicotinic acid adenine dinucleotide (NaAD). In Arthrobacter sp. (strain FB24), this protein is Probable nicotinate-nucleotide adenylyltransferase.